We begin with the raw amino-acid sequence, 155 residues long: Small ribosomal subunit protein uS7cz/uS7cy (155 aa).

The protein belongs to the universal ribosomal protein uS7 family. As to quaternary structure, part of the 30S ribosomal subunit.

It is found in the plastid. The protein localises to the chloroplast. One of the primary rRNA binding proteins, it binds directly to 16S rRNA where it nucleates assembly of the head domain of the 30S subunit. The chain is Small ribosomal subunit protein uS7cz/uS7cy (rps7-A) from Jasminum nudiflorum (Winter jasmine).